A 187-amino-acid chain; its full sequence is Large ribosomal subunit protein bL21 (187 aa).

Residues 157–187 are disordered; that stretch reads KVAKKAVKKTVKKATKTGAKKKAAKKTSKKA.

This sequence belongs to the bacterial ribosomal protein bL21 family. In terms of assembly, part of the 50S ribosomal subunit. Contacts protein L20.

Its function is as follows. This protein binds to 23S rRNA in the presence of protein L20. This Bdellovibrio bacteriovorus (strain ATCC 15356 / DSM 50701 / NCIMB 9529 / HD100) protein is Large ribosomal subunit protein bL21.